The sequence spans 161 residues: MATLQSLADLNRANTQTSNPENEAPVHVQKLDAQGRAYATGKRKDAVARVWIKPGNGTVVVNGRAVETYFARPVLRMILRQPLEIVGRVDQYDITVTVKGGGLSGQAGAVRHGLSKALTYYEPELRSPLKREGFLTRDPRVVERKKYGRKKARRSFQFSKR.

Over residues 1 to 21 (MATLQSLADLNRANTQTSNPE) the composition is skewed to polar residues. A disordered region spans residues 1–25 (MATLQSLADLNRANTQTSNPENEAP).

Belongs to the universal ribosomal protein uS9 family.

The protein is Small ribosomal subunit protein uS9 of Methylorubrum populi (strain ATCC BAA-705 / NCIMB 13946 / BJ001) (Methylobacterium populi).